The chain runs to 441 residues: MREIVHIQAGQCGNQIGSKFWEVISDEHGIDPTGQYVGDSDLQLERINVYYNEAGSNKYVPRAVLVDLEPGTMDSVRSGPFGQLFRPDNYVFGQSGAGNNWAKGHYTEGAELVDNVLDVVRKEAESTDCLQGFQLTHSLGGGTGSGMGTLLISKIREEYPDRIMNTFSVVPSPKVSDTVVEPYNATLSVHQLVENTDETFCIDNEALYDICFRTLKLTTPTYGDLNHLVSATMSGVTTCLRFPGQLNADLRKLAVNMVPFPRLHFFMPGFAPLTSRSNQQYRAITVPELTQQCFDAKNMMAACDPRHGRYLTAAAIFRGRMSMKEVDEQMLNIQNKNSSYFVDWIPNNVKTAVCDIPPRGLKMSATFIGNSTAIQELFKRISEQFTAMFRRKAFLHWYTGEGMDEMEFTEAESNMNDLVSEYQQYQEAAADEDAAEAFDGE.

Glutamine 11, glutamate 69, serine 138, glycine 142, threonine 143, glycine 144, asparagine 204, and asparagine 226 together coordinate GTP. A Mg(2+)-binding site is contributed by glutamate 69.

The protein belongs to the tubulin family. Dimer of alpha and beta chains. A typical microtubule is a hollow water-filled tube with an outer diameter of 25 nm and an inner diameter of 15 nM. Alpha-beta heterodimers associate head-to-tail to form protofilaments running lengthwise along the microtubule wall with the beta-tubulin subunit facing the microtubule plus end conferring a structural polarity. Microtubules usually have 13 protofilaments but different protofilament numbers can be found in some organisms and specialized cells. It depends on Mg(2+) as a cofactor. As to expression, expressed primarily in touch receptor neurons.

The protein localises to the cytoplasm. It localises to the cytoskeleton. Tubulin is the major constituent of microtubules, a cylinder consisting of laterally associated linear protofilaments composed of alpha- and beta-tubulin heterodimers. Microtubules grow by the addition of GTP-tubulin dimers to the microtubule end, where a stabilizing cap forms. Below the cap, tubulin dimers are in GDP-bound state, owing to GTPase activity of alpha-tubulin. Plays a role in mechanosensory transduction (touch sensitivity). Its function is as follows. Mec-7 beta-tubulin is required for the production of 15-protofilament microtubules. The chain is Tubulin beta-1 chain (mec-7) from Caenorhabditis briggsae.